The primary structure comprises 250 residues: tRNA (guanine-N(1)-)-methyltransferase (250 aa).

S-adenosyl-L-methionine contacts are provided by residues glycine 116 and 136–141 (IGDYVL).

The protein belongs to the RNA methyltransferase TrmD family. Homodimer.

It is found in the cytoplasm. The catalysed reaction is guanosine(37) in tRNA + S-adenosyl-L-methionine = N(1)-methylguanosine(37) in tRNA + S-adenosyl-L-homocysteine + H(+). Functionally, specifically methylates guanosine-37 in various tRNAs. This Pseudomonas syringae pv. tomato (strain ATCC BAA-871 / DC3000) protein is tRNA (guanine-N(1)-)-methyltransferase.